We begin with the raw amino-acid sequence, 225 residues long: NAD(P)H-quinone oxidoreductase subunit K, chloroplastic (225 aa).

[4Fe-4S] cluster-binding residues include Cys43, Cys44, Cys108, and Cys139.

Belongs to the complex I 20 kDa subunit family. As to quaternary structure, NDH is composed of at least 16 different subunits, 5 of which are encoded in the nucleus. [4Fe-4S] cluster is required as a cofactor.

It is found in the plastid. The protein resides in the chloroplast thylakoid membrane. The enzyme catalyses a plastoquinone + NADH + (n+1) H(+)(in) = a plastoquinol + NAD(+) + n H(+)(out). The catalysed reaction is a plastoquinone + NADPH + (n+1) H(+)(in) = a plastoquinol + NADP(+) + n H(+)(out). In terms of biological role, NDH shuttles electrons from NAD(P)H:plastoquinone, via FMN and iron-sulfur (Fe-S) centers, to quinones in the photosynthetic chain and possibly in a chloroplast respiratory chain. The immediate electron acceptor for the enzyme in this species is believed to be plastoquinone. Couples the redox reaction to proton translocation, and thus conserves the redox energy in a proton gradient. This chain is NAD(P)H-quinone oxidoreductase subunit K, chloroplastic, found in Triticum aestivum (Wheat).